The following is an 88-amino-acid chain: Small ribosomal subunit protein bS16c (88 aa).

This sequence belongs to the bacterial ribosomal protein bS16 family.

Its subcellular location is the plastid. The protein resides in the chloroplast. The sequence is that of Small ribosomal subunit protein bS16c from Jasminum nudiflorum (Winter jasmine).